A 371-amino-acid polypeptide reads, in one-letter code: Bifunctional enzyme IspD/IspF (371 aa).

The 2-C-methyl-D-erythritol 4-phosphate cytidylyltransferase stretch occupies residues 1 to 210 (MSEMSLIMLA…LNLPTPSFEI (210 aa)). The tract at residues 211 to 371 (FTGNGFDVHE…NLKYFDWTRL (161 aa)) is 2-C-methyl-D-erythritol 2,4-cyclodiphosphate synthase. Positions 217 and 219 each coordinate a divalent metal cation. 4-CDP-2-C-methyl-D-erythritol 2-phosphate is bound by residues 217 to 219 (DVH) and 243 to 244 (HS). His251 lines the a divalent metal cation pocket. 4-CDP-2-C-methyl-D-erythritol 2-phosphate is bound by residues 265–267 (DIG), 270–274 (YPDTD), 341–344 (TTTE), Phe348, and Arg351.

In the N-terminal section; belongs to the IspD/TarI cytidylyltransferase family. IspD subfamily. The protein in the C-terminal section; belongs to the IspF family. A divalent metal cation is required as a cofactor.

It carries out the reaction 2-C-methyl-D-erythritol 4-phosphate + CTP + H(+) = 4-CDP-2-C-methyl-D-erythritol + diphosphate. The catalysed reaction is 4-CDP-2-C-methyl-D-erythritol 2-phosphate = 2-C-methyl-D-erythritol 2,4-cyclic diphosphate + CMP. The protein operates within isoprenoid biosynthesis; isopentenyl diphosphate biosynthesis via DXP pathway; isopentenyl diphosphate from 1-deoxy-D-xylulose 5-phosphate: step 2/6. It functions in the pathway isoprenoid biosynthesis; isopentenyl diphosphate biosynthesis via DXP pathway; isopentenyl diphosphate from 1-deoxy-D-xylulose 5-phosphate: step 4/6. Bifunctional enzyme that catalyzes the formation of 4-diphosphocytidyl-2-C-methyl-D-erythritol from CTP and 2-C-methyl-D-erythritol 4-phosphate (MEP) (IspD), and catalyzes the conversion of 4-diphosphocytidyl-2-C-methyl-D-erythritol 2-phosphate (CDP-ME2P) to 2-C-methyl-D-erythritol 2,4-cyclodiphosphate (ME-CPP) with a corresponding release of cytidine 5-monophosphate (CMP) (IspF). This Campylobacter jejuni (strain RM1221) protein is Bifunctional enzyme IspD/IspF.